Reading from the N-terminus, the 528-residue chain is Phosphoenolpyruvate carboxykinase (ATP) (528 aa).

R56, Y192, and K198 together coordinate substrate. ATP-binding positions include K198, H217, and 233–241; that span reads GLSGTGKTT. Mn(2+) contacts are provided by K198 and H217. D254 lines the Mn(2+) pocket. Positions 282, 319, and 444 each coordinate ATP. R319 provides a ligand contact to substrate.

This sequence belongs to the phosphoenolpyruvate carboxykinase (ATP) family. Mn(2+) is required as a cofactor.

Its subcellular location is the cytoplasm. It catalyses the reaction oxaloacetate + ATP = phosphoenolpyruvate + ADP + CO2. It participates in carbohydrate biosynthesis; gluconeogenesis. Its function is as follows. Involved in the gluconeogenesis. Catalyzes the conversion of oxaloacetate (OAA) to phosphoenolpyruvate (PEP) through direct phosphoryl transfer between the nucleoside triphosphate and OAA. This Bacillus mycoides (strain KBAB4) (Bacillus weihenstephanensis) protein is Phosphoenolpyruvate carboxykinase (ATP).